Consider the following 219-residue polypeptide: 2-C-methyl-D-erythritol 4-phosphate cytidylyltransferase (219 aa).

This sequence belongs to the IspD/TarI cytidylyltransferase family. IspD subfamily.

The catalysed reaction is 2-C-methyl-D-erythritol 4-phosphate + CTP + H(+) = 4-CDP-2-C-methyl-D-erythritol + diphosphate. It functions in the pathway isoprenoid biosynthesis; isopentenyl diphosphate biosynthesis via DXP pathway; isopentenyl diphosphate from 1-deoxy-D-xylulose 5-phosphate: step 2/6. Its function is as follows. Catalyzes the formation of 4-diphosphocytidyl-2-C-methyl-D-erythritol from CTP and 2-C-methyl-D-erythritol 4-phosphate (MEP). The polypeptide is 2-C-methyl-D-erythritol 4-phosphate cytidylyltransferase (Chlamydia trachomatis serovar L2 (strain ATCC VR-902B / DSM 19102 / 434/Bu)).